A 187-amino-acid polypeptide reads, in one-letter code: Mitochondrial import receptor subunit TOM20-4 (187 aa).

Met1 is subject to N-acetylmethionine. The Cytoplasmic portion of the chain corresponds to 1–160; that stretch reads MDMQNENERL…QKKTSEFKYD (160 aa). The stretch at 84–117 is one TPR repeat; that stretch reads LSFGFLSSDQTEASDNFEKASQFFQLAVEEQPES. The chain crosses the membrane as a helical span at residues 161-178; sequence VFGWVILASYVVAWISFA. Residues 179–187 lie on the Mitochondrial intermembrane side of the membrane; sequence NSQTPVSRQ. The short motif at 179–187 is the AKR2A-binding sequence (ABS) required for mitochondrion outer membrane targeting element; that stretch reads NSQTPVSRQ.

It belongs to the Tom20 family. Forms part of the preprotein translocase complex of the outer mitochondrial membrane (TOM complex) which consists of at least 6 different proteins (TOM5, TOM6, TOM7, TOM20, TOM22/TOM9 and TOM40). Interacts with a variety of mitochondrial precursor proteins. Interacts with AKR2A. Component of a mitochondrial large protein complex that contains, at least, MIC60, DGS1, TOM40, TOM20 proteins, and petC/RISP. The N-terminus is blocked. In terms of tissue distribution, expressed in roots, flowers, young cotyledons and leaves.

Its subcellular location is the mitochondrion outer membrane. Central component of the receptor complex responsible for the recognition and translocation of cytosolically synthesized mitochondrial preproteins. Together with TOM22 functions as the transit peptide receptor at the surface of the mitochondrion outer membrane and facilitates the movement of preproteins into the translocation pore. This is Mitochondrial import receptor subunit TOM20-4 from Arabidopsis thaliana (Mouse-ear cress).